Here is a 273-residue protein sequence, read N- to C-terminus: Large ribosomal subunit protein uL2cy (273 aa).

Disordered regions lie at residues 1 to 22 (MAIHLYKTSTPSTRNGAVDSQV) and 224 to 273 (NPVD…RRRK).

It belongs to the universal ribosomal protein uL2 family. In terms of assembly, part of the 50S ribosomal subunit.

It is found in the plastid. Its subcellular location is the chloroplast. This Chloranthus spicatus (Chulantree) protein is Large ribosomal subunit protein uL2cy (rpl2-B).